Consider the following 410-residue polypeptide: Elongation factor Tu, chloroplastic (410 aa).

One can recognise a tr-type G domain in the interval 10–214 (KPHVNIGTIG…QVDAYIPTPE (205 aa)). The segment at 19–26 (GHVDHGKT) is G1. Position 19-26 (19-26 (GHVDHGKT)) interacts with GTP. Position 26 (T26) interacts with Mg(2+). The G2 stretch occupies residues 60-64 (GITIN). The interval 81–84 (DCPG) is G3. GTP is bound by residues 81-85 (DCPGH) and 136-139 (NKED). Positions 136 to 139 (NKED) are G4. Residues 174 to 176 (SAL) form a G5 region.

It belongs to the TRAFAC class translation factor GTPase superfamily. Classic translation factor GTPase family. EF-Tu/EF-1A subfamily.

Its subcellular location is the plastid. It localises to the chloroplast. The catalysed reaction is GTP + H2O = GDP + phosphate + H(+). In terms of biological role, GTP hydrolase that promotes the GTP-dependent binding of aminoacyl-tRNA to the A-site of ribosomes during protein biosynthesis. The protein is Elongation factor Tu, chloroplastic (tufA) of Chlorokybus atmophyticus (Soil alga).